The sequence spans 140 residues: Acyl-coenzyme A thioesterase 13 (140 aa).

At Met1 the chain carries N-acetylmethionine. Thr2 is modified (N-acetylthreonine; in Acyl-coenzyme A thioesterase 13, N-terminally processed). Lys27, Lys37, and Lys43 each carry N6-acetyllysine. Glu46 contributes to the CoA binding site. Substrate is bound by residues Asn50 and Gly81. CoA-binding positions include Ser83, 90-95 (YMSPAK), and 108-113 (KQGKTL). N6-acetyllysine is present on residues Lys108 and Lys127. A CoA-binding site is contributed by His137.

This sequence belongs to the thioesterase PaaI family. In terms of assembly, homotetramer. Interacts with PCTP.

The protein localises to the cytoplasm. It is found in the cytosol. Its subcellular location is the mitochondrion. The protein resides in the nucleus. It localises to the cytoskeleton. The protein localises to the spindle. It carries out the reaction a fatty acyl-CoA + H2O = a fatty acid + CoA + H(+). The enzyme catalyses decanoyl-CoA + H2O = decanoate + CoA + H(+). The catalysed reaction is octanoyl-CoA + H2O = octanoate + CoA + H(+). It catalyses the reaction butanoyl-CoA + H2O = butanoate + CoA + H(+). It carries out the reaction hexanoyl-CoA + H2O = hexanoate + CoA + H(+). The enzyme catalyses tetradecanoyl-CoA + H2O = tetradecanoate + CoA + H(+). The catalysed reaction is hexadecanoyl-CoA + H2O = hexadecanoate + CoA + H(+). It catalyses the reaction dodecanoyl-CoA + H2O = dodecanoate + CoA + H(+). It carries out the reaction (9Z)-octadecenoyl-CoA + H2O = (9Z)-octadecenoate + CoA + H(+). The enzyme catalyses (5Z,8Z,11Z,14Z)-eicosatetraenoyl-CoA + H2O = (5Z,8Z,11Z,14Z)-eicosatetraenoate + CoA + H(+). Catalyzes the hydrolysis of acyl-CoAs into free fatty acids and coenzyme A (CoASH), regulating their respective intracellular levels. Has acyl-CoA thioesterase activity towards medium (C12) and long-chain (C18) fatty acyl-CoA substrates. Can also hydrolyze 3-hydroxyphenylacetyl-CoA and 3,4-dihydroxyphenylacetyl-CoA (in vitro). May play a role in controlling adaptive thermogenesis. The sequence is that of Acyl-coenzyme A thioesterase 13 from Homo sapiens (Human).